The chain runs to 310 residues: Methionyl-tRNA formyltransferase (310 aa).

Residue 111-114 (SLLP) participates in (6S)-5,6,7,8-tetrahydrofolate binding.

It belongs to the Fmt family.

The catalysed reaction is L-methionyl-tRNA(fMet) + (6R)-10-formyltetrahydrofolate = N-formyl-L-methionyl-tRNA(fMet) + (6S)-5,6,7,8-tetrahydrofolate + H(+). Functionally, attaches a formyl group to the free amino group of methionyl-tRNA(fMet). The formyl group appears to play a dual role in the initiator identity of N-formylmethionyl-tRNA by promoting its recognition by IF2 and preventing the misappropriation of this tRNA by the elongation apparatus. The protein is Methionyl-tRNA formyltransferase of Rhodopseudomonas palustris (strain ATCC BAA-98 / CGA009).